Consider the following 1447-residue polypeptide: Baculoviral IAP repeat-containing protein 1b (1447 aa).

3 BIR repeats span residues 60-127 (EAKR…CEFL), 159-227 (EEAR…CEFL), and 278-345 (EELR…CVFL). Zn(2+) contacts are provided by cysteine 315, cysteine 318, histidine 335, and cysteine 342. Residues 508–802 (SVMCVEGEAG…EFLAAVRLTE (295 aa)) enclose the NACHT domain. Lysine 520 provides a ligand contact to ATP.

Component of the NLRC4 inflammasome, at least composed of NLRC4, caspase-1 (CASP1) and some NAIP protein. Interacts with S.typhimurium (Salmonella) PrgJ and B.thailandensis BsaK.

Sensor component of the NLRC4 inflammasome that specifically recognizes and binds type III secretion system (T3SS) rod proteins such as S.typhimurium (Salmonella) PrgJ and B.thailandensis BsaK from pathogenic bacteria. Association of pathogenic bacteria proteins drives in turn drive assembly and activation of the NLRC4 inflammasome, promoting caspase-1 activation, cytokine production and macrophage pyroptosis. The NLRC4 inflammasome is activated as part of the innate immune response to a range of intracellular bacteria. The NLRC4 inflammasome senses Gram-negative bacteria such as L.pneumophila and P.aeruginosa, enteric pathogens S.typhimurium (Salmonella) and S.flexneri. Prevents motor-neuron apoptosis induced by a variety of signals. The chain is Baculoviral IAP repeat-containing protein 1b (Naip2) from Mus musculus (Mouse).